We begin with the raw amino-acid sequence, 247 residues long: RNA-free ribonuclease P (247 aa).

It belongs to the HARP family.

It carries out the reaction Endonucleolytic cleavage of RNA, removing 5'-extranucleotides from tRNA precursor.. In terms of biological role, RNA-free RNase P that catalyzes the removal of the 5'-leader sequence from pre-tRNA to produce the mature 5'-terminus. This chain is RNA-free ribonuclease P, found in Methanosarcina mazei (strain ATCC BAA-159 / DSM 3647 / Goe1 / Go1 / JCM 11833 / OCM 88) (Methanosarcina frisia).